A 229-amino-acid polypeptide reads, in one-letter code: Uracil-DNA glycosylase (229 aa).

The active-site Proton acceptor is Asp-64.

It belongs to the uracil-DNA glycosylase (UDG) superfamily. UNG family.

It localises to the cytoplasm. It catalyses the reaction Hydrolyzes single-stranded DNA or mismatched double-stranded DNA and polynucleotides, releasing free uracil.. Excises uracil residues from the DNA which can arise as a result of misincorporation of dUMP residues by DNA polymerase or due to deamination of cytosine. In Escherichia coli O81 (strain ED1a), this protein is Uracil-DNA glycosylase.